Here is a 485-residue protein sequence, read N- to C-terminus: Glutamyl-tRNA(Gln) amidotransferase subunit A (485 aa).

Residues lysine 76 and serine 151 each act as charge relay system in the active site. Serine 175 (acyl-ester intermediate) is an active-site residue.

The protein belongs to the amidase family. GatA subfamily. Heterotrimer of A, B and C subunits.

The enzyme catalyses L-glutamyl-tRNA(Gln) + L-glutamine + ATP + H2O = L-glutaminyl-tRNA(Gln) + L-glutamate + ADP + phosphate + H(+). Allows the formation of correctly charged Gln-tRNA(Gln) through the transamidation of misacylated Glu-tRNA(Gln) in organisms which lack glutaminyl-tRNA synthetase. The reaction takes place in the presence of glutamine and ATP through an activated gamma-phospho-Glu-tRNA(Gln). This is Glutamyl-tRNA(Gln) amidotransferase subunit A from Pelagibacter ubique (strain HTCC1062).